A 435-amino-acid chain; its full sequence is Deoxybrevianamide E synthase (435 aa).

A disordered region spans residues 1-28 (MTAPELRAPAGHPQEPPARSSPAQALSS). A brevianamide F-binding site is contributed by Glu-96. Dimethylallyl diphosphate is bound by residues Arg-110, Lys-195, Tyr-197, Lys-265, Tyr-267, Tyr-354, Tyr-419, and Tyr-423.

It belongs to the tryptophan dimethylallyltransferase family. Monomer.

It catalyses the reaction brevianamide F + dimethylallyl diphosphate = deoxybrevianamide E + diphosphate. The protein operates within alkaloid biosynthesis. In terms of biological role, deoxybrevianamide E synthase; part of the gene cluster that mediates the biosynthesis of notoamide, a fungal indole alkaloid that belongs to a family of natural products containing a characteristic bicyclo[2.2.2]diazaoctane core. The first step of notoamide biosynthesis involves coupling of L-proline and L-tryptophan by the bimodular NRPS notE', to produce cyclo-L-tryptophan-L-proline called brevianamide F. The reverse prenyltransferase notF' then acts as a deoxybrevianamide E synthase and converts brevianamide F to deoxybrevianamide E via reverse prenylation at C-2 of the indole ring leading to the bicyclo[2.2.2]diazaoctane core. Deoxybrevianamide E is further hydroxylated at C-6 of the indole ring, likely catalyzed by the cytochrome P450 monooxygenase notG', to yield 6-hydroxy-deoxybrevianamide E. 6-hydroxy-deoxybrevianamide E is a specific substrate of the prenyltransferase notC' for normal prenylation at C-7 to produce 6-hydroxy-7-prenyl-deoxybrevianamide, also called notoamide S. As the proposed pivotal branching point in notoamide biosynthesis, notoamide S can be diverted to notoamide E through an oxidative pyran ring closure putatively catalyzed by either notH' cytochrome P450 monooxygenase or the notD' FAD-linked oxidoreductase. This step would be followed by an indole 2,3-epoxidation-initiated pinacol-like rearrangement catalyzed by the notB' FAD-dependent monooxygenase leading to the formation of notoamide C and notoamide D. On the other hand notoamide S is converted to notoamide T by notH' (or notD'), a bifunctional oxidase that also functions as the intramolecular Diels-Alderase responsible for generation of (-)-notoamide T. To generate antipodal (+)-notoaminide T, notH (or notD) in Aspergillus strain MF297-2 is expected to catalyze a Diels-Alder reaction leading to the opposite stereochemistry. The remaining oxidoreductase notD' (or notH') likely catalyzes the oxidative pyran ring formation to yield (-)-stephacidin A. The FAD-dependent monooxygenase notI' is highly similar to notB' and is predicted to catalyze a similar conversion from (-)-stephacidin A to (+)-notoamide B via the 2,3-epoxidation of (-)-stephacidin A followed by a pinacol-type rearrangement. Finally, it remains unclear which enzyme could be responsible for the final hydroxylation steps leading to notoamide A and sclerotiamide. This chain is Deoxybrevianamide E synthase, found in Aspergillus versicolor.